Here is a 570-residue protein sequence, read N- to C-terminus: E3 ubiquitin-protein ligase ZFP91 (570 aa).

Residues 1–12 show a composition bias toward basic and acidic residues; sequence MPGETEEPRPPE. Residues 1–306 are disordered; the sequence is MPGETEEPRP…PRLPKRRKKP (306 aa). Low complexity-rich tracts occupy residues 31 to 43 and 59 to 68; these read QRPPEAVAAAPAG and AAAAAAAAAV. Residues 69 to 82 show a composition bias toward basic residues; that stretch reads SRRRKAEYPRRRRS. A phosphoserine mark is found at S83 and S103. Residues 94-104 show a composition bias toward polar residues; sequence QQPQAAKSPSP. Residues 119-128 show a composition bias toward basic and acidic residues; sequence VTTDKDPKEE. The span at 207-223 shows a compositional bias: acidic residues; that stretch reads SEEEEEEEEEMLISEEE. 2 stretches are compositionally biased toward basic and acidic residues: residues 224 to 245 and 252 to 269; these read IPFKDDPRDETYKPHLERETPK and KVKEEKEKKEIKVEVEVE. Acidic residues predominate over residues 270 to 282; sequence VKEEENEIREDEE. 5 consecutive C2H2-type zinc fingers follow at residues 311–336, 342–366, 372–394, 400–422, and 430–453; these read VRCEMEGCGTVLAHPRYLQHHIKYQH, YVCPHPSCGRLFRLQKQLLRHAKHH, YICEYCARAFKSSHNLAVHRMIH, LQCEICGFTCRQKASLNWHMKKH, and FSCNICGKKFEKKDSVVAHKAKSH. The interval 338–368 is interaction with MAP3K14/NIK; sequence LKKKYVCPHPSCGRLFRLQKQLLRHAKHHTD.

Belongs to the krueppel C2H2-type zinc-finger protein family. As to quaternary structure, interacts with MAP3K14/NIK. As to expression, expressed ubiquitously, particularly at high level in testis. Isoform 2 is testis specific.

It localises to the nucleus. The catalysed reaction is S-ubiquitinyl-[E2 ubiquitin-conjugating enzyme]-L-cysteine + [acceptor protein]-L-lysine = [E2 ubiquitin-conjugating enzyme]-L-cysteine + N(6)-ubiquitinyl-[acceptor protein]-L-lysine.. Its pathway is protein modification; protein ubiquitination. In terms of biological role, atypical E3 ubiquitin-protein ligase that mediates 'Lys-63'-linked ubiquitination of MAP3K14/NIK, leading to stabilize and activate MAP3K14/NIK. It thereby acts as an activator of the non-canonical NF-kappa-B2/NFKB2 pathway. May also play an important role in cell proliferation and/or anti-apoptosis. This chain is E3 ubiquitin-protein ligase ZFP91 (ZFP91), found in Homo sapiens (Human).